The primary structure comprises 155 residues: Small ribosomal subunit protein uS7c (155 aa).

The protein belongs to the universal ribosomal protein uS7 family. Part of the 30S ribosomal subunit.

It localises to the plastid. The protein resides in the chloroplast. Its function is as follows. One of the primary rRNA binding proteins, it binds directly to 16S rRNA where it nucleates assembly of the head domain of the 30S subunit. This is Small ribosomal subunit protein uS7c (rps7) from Typha angustifolia (Narrow leaf cattail).